The primary structure comprises 523 residues: MSLPRFRLVQGKAIGERSTPGVSTPEPAPPQIKQEVDYQDAHQMAPEPVEAPQAQNHQMQPPRQPIQQQMQHFQSPSPMAPQGPPGTPQNSAAAAAAASDDKNVTKCVRFLKTLINLSNNDDPEMPDKAARVKELIRGVIYLETTAEEFTRNLQQVLKSQAQPHLLPFLQNTLPALRNAVRNGTASVEGVNPPPGYVFNNGRTPGPPQPPPPQQQSQQQPPLEMRQIPNPNQIPPQMVQGGPHMVSVGARPMIRPMGPGGPSPMGLQGPVRGPMGHQMVQMHPPPPPQQIQQQHPAPPVEMEVEENLQPTAAATATRQYPEGSLKSSILKPDEVLNRITKRMMSSCSVEEEALVAISDAVESHLRELITLMAGVAEHRVESLRIPENYVAIDDVKRQLRFLEDLDRQEEELRESREKESLIRMSKNKNSGKETIEKAKEMQRQDAEAKRNRDANAAAIAALSSNKTVKNKWENTGAATTAPRPRTVRVTTRDLHLLVNQDSRFTGTFIREKMSYGGPAVDTTI.

Disordered regions lie at residues 1–100 (MSLP…AASD) and 185–241 (ASVE…VQGG). Residues 58 to 77 (QMQPPRQPIQQQMQHFQSPS) are compositionally biased toward low complexity. Over residues 78–87 (PMAPQGPPGT) the composition is skewed to pro residues. The TAFH domain occupies 101-199 (DKNVTKCVRF…VNPPPGYVFN (99 aa)). Residues 204–213 (PGPPQPPPPQ) are compositionally biased toward pro residues. Residues 214–236 (QQSQQQPPLEMRQIPNPNQIPPQ) are compositionally biased toward low complexity. The histone-fold stretch occupies residues 329-383 (LKPDEVLNRITKRMMSSCSVEEEALVAISDAVESHLRELITLMAGVAEHRVESLR). Positions 333–382 (EVLNRITKRMMSSCSVEEEALVAISDAVESHLRELITLMAGVAEHRVESL) are necessary and sufficient for interaction with oma-1. A disordered region spans residues 407–435 (QEEELRESREKESLIRMSKNKNSGKETIE).

The protein belongs to the TAF4 family. Component of the TFIID basal transcription factor complex, composed of TATA-box-binding protein tbp-1, and a number of TBP-associated factors (TAFs). Interacts (via histone-fold domain) with oma-1 (via histone-fold domain). May also interact with oma-2. Interacts (via histone-fold domain) with taf-12 (via the histone-fold domain).

Its subcellular location is the nucleus. It localises to the cytoplasm. The TFIID basal transcription factor complex plays a major role in the initiation of RNA polymerase II (Pol II)-dependent transcription. TFIID recognizes and binds promoters via its subunit tbp-1, a TATA-box-binding protein, and promotes assembly of the pre-initiation complex (PIC). The TFIID complex consists of tbp-1 and TBP-associated factors (TAFs), including taf-4. Essential for early embryonic development, probably acting via activating transcription initiation by RNA polymerase II, as part of the TFIID complex. In early embryos, but not oocytes, remains, presumably inactive, in the cytoplasm as a result of binding to oma-1. Upon degradation of oma-1, taf-4 is released and bound by taf-12, and the taf-4/12 heterodimer translocates to the nucleus and transcriptional repression is relieved. Involved in lifespan extension in a manner dependent upon mitochondrial function. Plays a role in modulating polyribosome formation. The sequence is that of Transcription initiation factor TFIID subunit 4 from Caenorhabditis elegans.